Consider the following 816-residue polypeptide: Sucrose synthase 2 (816 aa).

Residues 280–757 (MVLNVVILSP…GLQRIEEKYT (478 aa)) form a GT-B glycosyltransferase region.

It belongs to the glycosyltransferase 1 family. Plant sucrose synthase subfamily. Forms homotetramers and heterotetramers with SS1, all three possible heterotetramers are formed. As to expression, abundant in developing endosperm, low in aleurone, and undetected in coleoptiles and roots. Also detected in crude extracts of anthers and in immature embryos.

It carries out the reaction an NDP-alpha-D-glucose + D-fructose = a ribonucleoside 5'-diphosphate + sucrose + H(+). In terms of biological role, sucrose-cleaving enzyme that provides UDP-glucose and fructose for various metabolic pathways. This Hordeum vulgare (Barley) protein is Sucrose synthase 2 (SS2).